We begin with the raw amino-acid sequence, 596 residues long: Protein NRT1/ PTR FAMILY 3.1 (596 aa).

The span at 1-16 (MEEQSKNKISEEEKQL) shows a compositional bias: basic and acidic residues. Residues 1–23 (MEEQSKNKISEEEKQLHGRPNRP) form a disordered region. 12 consecutive transmembrane segments (helical) span residues 27–47 (LITMPFIFANEICEKLAVVGF), 73–93 (FAGTSSLTPLLGAFIADSFAG), 98–118 (ITFASIIYQIGMTLLTISAII), 137–157 (TAQLSILYVALLLGALGSGGI), 185–205 (NWYYFCMGAAVLLAVTVLVWI), 213–233 (LGLGIPTVAMFLSVIAFVGGF), 334–354 (MGPIGASGILLITAYAQQGTF), 372–392 (IPAGSMSVFTTVAMLTTIIFY), 416–436 (MGIGFVISIIATLVAGFVEVK), 453–473 (IVPISFLWLIPQYGLHGVAEA), 497–517 (ALFWMAISIGNYVSTLLVTLV), and 542–562 (YFYWLITVLQAVNLVYYLWCA).

It belongs to the major facilitator superfamily. Proton-dependent oligopeptide transporter (POT/PTR) (TC 2.A.17) family. As to expression, expressed in shoots, stems, leaves, flowers and siliques.

The protein localises to the membrane. In terms of biological role, may act as an efflux-type nitrite transporter. Not regulated by the PII protein involved in the regulation of nitrite uptake into higher plant chloroplasts. This chain is Protein NRT1/ PTR FAMILY 3.1 (NPF3.1), found in Arabidopsis thaliana (Mouse-ear cress).